The following is a 289-amino-acid chain: 5'-adenylylsulfate reductase-like 7 (289 aa).

Residues 1-23 (MNLWVSIFLVSAIAGSCLPSGFA) form the signal peptide. Residues 37–157 (SVIEQKCPRS…LIQFYKETTG (121 aa)) enclose the Thioredoxin domain. N-linked (GlcNAc...) asparagine glycosylation is found at asparagine 132 and asparagine 184. A helical membrane pass occupies residues 198-218 (MVLALMFLSLKLAILIFPIMG).

It is found in the membrane. The polypeptide is 5'-adenylylsulfate reductase-like 7 (APRL7) (Arabidopsis thaliana (Mouse-ear cress)).